Reading from the N-terminus, the 148-residue chain is Snaclec 6 (148 aa).

Residues 1–23 (MGRFIFVSFGLLVMFLSLSGTEA) form the signal peptide. Cystine bridges form between Cys27–Cys38, Cys55–Cys144, and Cys121–Cys136. Positions 34–145 (YDQNCYKAFE…CSGTHNFVCK (112 aa)) constitute a C-type lectin domain. N-linked (GlcNAc...) asparagine glycosylation occurs at Asn130.

The protein belongs to the snaclec family. As to quaternary structure, heterodimer; disulfide-linked. In terms of tissue distribution, expressed by the venom gland.

It localises to the secreted. In terms of biological role, interferes with one step of hemostasis (modulation of platelet aggregation, or coagulation cascade, for example). This chain is Snaclec 6, found in Bitis arietans (African puff adder).